Reading from the N-terminus, the 530-residue chain is Metal transporter Nramp2 (530 aa).

Positions 1 to 35 (MENDVKENLEEEEDRLLPPPPPSQSLPSTDSESEA) are disordered. 12 helical membrane-spanning segments follow: residues 68 to 88 (LWLF…PGNL), 96 to 116 (AIAG…GLLI), 153 to 173 (LALI…IQIL), 177 to 197 (FLPL…FLFL), 205 to 225 (LEAV…WMFG), 251 to 271 (AVGV…SALV), 297 to 317 (VALF…AKGF), 339 to 359 (FGGG…AAGQ), 395 to 415 (IVPT…LDVL), 418 to 438 (WLNV…LTLV), 456 to 476 (IAWT…LDFF), and 484 to 504 (LFGV…VYLI).

It belongs to the NRAMP (TC 2.A.55) family.

The protein resides in the membrane. In terms of biological role, seems to be involved in iron uptake. This is Metal transporter Nramp2 (NRAMP2) from Arabidopsis thaliana (Mouse-ear cress).